The primary structure comprises 180 residues: Large ribosomal subunit protein uL6 (180 aa).

Belongs to the universal ribosomal protein uL6 family. Part of the 50S ribosomal subunit.

This protein binds to the 23S rRNA, and is important in its secondary structure. It is located near the subunit interface in the base of the L7/L12 stalk, and near the tRNA binding site of the peptidyltransferase center. The chain is Large ribosomal subunit protein uL6 from Anaeromyxobacter sp. (strain Fw109-5).